Reading from the N-terminus, the 205-residue chain is Putative 3-methyladenine DNA glycosylase (205 aa).

This sequence belongs to the DNA glycosylase MPG family.

This is Putative 3-methyladenine DNA glycosylase from Bacillus cereus (strain ATCC 10987 / NRS 248).